A 364-amino-acid chain; its full sequence is Glutamine synthetase (364 aa).

Positions 15 to 94 constitute a GS beta-grasp domain; sequence VLAEYIWIDA…VLAECWNNDG (80 aa). The GS catalytic domain occupies 101-364; it reads HRHECAKLMS…ETKRGEEEGF (264 aa).

It belongs to the glutamine synthetase family. As to quaternary structure, homooctamer.

It localises to the cytoplasm. The catalysed reaction is L-glutamate + NH4(+) + ATP = L-glutamine + ADP + phosphate + H(+). This Yarrowia lipolytica (strain CLIB 122 / E 150) (Yeast) protein is Glutamine synthetase (GLN1).